The sequence spans 31 residues: Cytolysin Oshem 2 (31 aa).

The protein resides in the secreted. It localises to the nematocyst. Its subcellular location is the target cell membrane. Its function is as follows. Cytolysin that shows weak hemolysis and weak myonecrosis. This Olindias sambaquiensis (Hydromedusa) protein is Cytolysin Oshem 2.